The following is a 177-amino-acid chain: Large ribosomal subunit protein uL5 (177 aa).

Belongs to the universal ribosomal protein uL5 family. In terms of assembly, part of the 50S ribosomal subunit; part of the 5S rRNA/L5/L18/L25 subcomplex. Contacts the 5S rRNA and the P site tRNA. Forms a bridge to the 30S subunit in the 70S ribosome.

Its function is as follows. This is one of the proteins that bind and probably mediate the attachment of the 5S RNA into the large ribosomal subunit, where it forms part of the central protuberance. In the 70S ribosome it contacts protein S13 of the 30S subunit (bridge B1b), connecting the 2 subunits; this bridge is implicated in subunit movement. Contacts the P site tRNA; the 5S rRNA and some of its associated proteins might help stabilize positioning of ribosome-bound tRNAs. The sequence is that of Large ribosomal subunit protein uL5 from Ehrlichia chaffeensis (strain ATCC CRL-10679 / Arkansas).